The sequence spans 381 residues: Malonyl-CoA-acyl carrier protein transacylase, mitochondrial (381 aa).

Active-site residues include Ser151 and His268. An N6-succinyllysine modification is found at Lys312.

Belongs to the type II malonyltransferase family. Expressed in retinal ganglion cells.

It localises to the mitochondrion. The enzyme catalyses holo-[ACP] + malonyl-CoA = malonyl-[ACP] + CoA. The protein operates within lipid metabolism; fatty acid biosynthesis. Functionally, catalyzes the transfer of a malonyl moiety from malonyl-CoA to the free thiol group of the phosphopantetheine arm of the mitochondrial ACP protein (NDUFAB1). This suggests the existence of the biosynthesis of fatty acids in mitochondria. This chain is Malonyl-CoA-acyl carrier protein transacylase, mitochondrial, found in Mus musculus (Mouse).